The primary structure comprises 396 residues: NADH-ubiquinone oxidoreductase 49 kDa subunit (396 aa).

Belongs to the complex I 49 kDa subunit family.

It localises to the mitochondrion. The catalysed reaction is a ubiquinone + NADH + 5 H(+)(in) = a ubiquinol + NAD(+) + 4 H(+)(out). Its function is as follows. Core subunit of the mitochondrial membrane respiratory chain NADH dehydrogenase (Complex I) that is believed to belong to the minimal assembly required for catalysis. Complex I functions in the transfer of electrons from NADH to the respiratory chain. The immediate electron acceptor for the enzyme is believed to be ubiquinone. Component of the iron-sulfur (IP) fragment of the enzyme. Component of the iron-sulfur (IP) fragment of the enzyme. The polypeptide is NADH-ubiquinone oxidoreductase 49 kDa subunit (NAD7) (Reclinomonas americana).